The following is a 166-amino-acid chain: MMYFIYLLSVMLVLSFMAFASNPSPIYGGLSLVLSGGVGCGIIVSLGGSFLGLIVFLVYLGGMLVVFGYTAAMATEEYPETWVDYTVVLNLAIMVGMLGVVWYEFFEEVDLGVGYDLLDLGGMEVLGGDFNGVSLLYACGGWELVFSGWILFLTIFVVLEVTRGEH.

A run of 5 helical transmembrane segments spans residues 1 to 21 (MMYF…AFAS), 26 to 46 (IYGG…IVSL), 47 to 67 (GGSF…LVVF), 86 to 106 (TVVL…YEFF), and 139 to 159 (CGGW…FVVL).

The protein belongs to the complex I subunit 6 family. In terms of assembly, core subunit of respiratory chain NADH dehydrogenase (Complex I) which is composed of 45 different subunits.

Its subcellular location is the mitochondrion inner membrane. The catalysed reaction is a ubiquinone + NADH + 5 H(+)(in) = a ubiquinol + NAD(+) + 4 H(+)(out). Functionally, core subunit of the mitochondrial membrane respiratory chain NADH dehydrogenase (Complex I) which catalyzes electron transfer from NADH through the respiratory chain, using ubiquinone as an electron acceptor. Essential for the catalytic activity and assembly of complex I. The protein is NADH-ubiquinone oxidoreductase chain 6 (MT-ND6) of Tachyglossus aculeatus aculeatus (Southeast Australian short-beaked echidna).